Consider the following 393-residue polypeptide: Ethanol acetyltransferase 1 (393 aa).

The N-terminal 25 residues, 1 to 25 (MHFTRTLFNQVASKASRQLPVQKRV), are a transit peptide targeting the mitochondrion. The AB hydrolase-1 domain occupies 49 to 151 (PIVFVHGIFG…GVIIDNSPIE (103 aa)). Catalysis depends on charge relay system residues S122, D146, and H296. Basic and acidic residues predominate over residues 343–354 (AKHAQQIEELRK). The tract at residues 343 to 393 (AKHAQQIEELRKVTSTSESSIPHSTQSSEQAFTENIDLARQEREHQKSVSA) is disordered. The segment covering 355 to 375 (VTSTSESSIPHSTQSSEQAFT) has biased composition (polar residues). Residues 379-393 (DLARQEREHQKSVSA) are compositionally biased toward basic and acidic residues.

The protein belongs to the AB hydrolase superfamily.

The protein localises to the mitochondrion. The catalysed reaction is ethanol + acetyl-CoA = ethyl acetate + CoA. It carries out the reaction acetyl-CoA + H2O = acetate + CoA + H(+). It catalyses the reaction ethyl acetate + H2O = ethanol + acetate + H(+). Alcohol acetyltransferase that catalyzes the synthesis of ethyl acetate from ethanol and acetyl-CoA. Can also function as a thioesterase by hydrolyzing acetyl-CoA in the absence of ethanol, as well as esterase hydrolyzing ethyl acetate. In Wickerhamomyces ciferrii (strain ATCC 14091 / BCRC 22168 / CBS 111 / JCM 3599 / NBRC 0793 / NRRL Y-1031 F-60-10) (Yeast), this protein is Ethanol acetyltransferase 1 (EAT1).